Here is a 267-residue protein sequence, read N- to C-terminus: Aliphatic sulfonates import ATP-binding protein SsuB 1 (267 aa).

The region spanning 35–249 (VRVRGLRRVF…RRADPAFDRL (215 aa)) is the ABC transporter domain. 67-74 (GRSGSGKS) contributes to the ATP binding site.

It belongs to the ABC transporter superfamily. Aliphatic sulfonates importer (TC 3.A.1.17.2) family. As to quaternary structure, the complex is composed of two ATP-binding proteins (SsuB), two transmembrane proteins (SsuC) and a solute-binding protein (SsuA).

It is found in the cell membrane. It carries out the reaction ATP + H2O + aliphatic sulfonate-[sulfonate-binding protein]Side 1 = ADP + phosphate + aliphatic sulfonateSide 2 + [sulfonate-binding protein]Side 1.. Part of the ABC transporter complex SsuABC involved in aliphatic sulfonates import. Responsible for energy coupling to the transport system. This Frankia alni (strain DSM 45986 / CECT 9034 / ACN14a) protein is Aliphatic sulfonates import ATP-binding protein SsuB 1.